The sequence spans 142 residues: Metallothiol transferase FosB (142 aa).

The 116-residue stretch at 5–120 folds into the VOC domain; it reads NVNHICFSVS…DGHKIELHTG (116 aa). His8, His67, and Glu116 together coordinate Mg(2+). The active-site Proton donor/acceptor is Glu116.

It belongs to the fosfomycin resistance protein family. FosB subfamily. Homodimer. Mg(2+) serves as cofactor.

It is found in the cytoplasm. Functionally, metallothiol transferase which confers resistance to fosfomycin by catalyzing the addition of a thiol cofactor to fosfomycin. L-cysteine is probably the physiological thiol donor. In Staphylococcus epidermidis (strain ATCC 35984 / DSM 28319 / BCRC 17069 / CCUG 31568 / BM 3577 / RP62A), this protein is Metallothiol transferase FosB.